Reading from the N-terminus, the 337-residue chain is Methionine import ATP-binding protein MetN (337 aa).

In terms of domain architecture, ABC transporter spans 4-240 (IKNLEITYPG…PWHPITKEFV (237 aa)). Residue 37–44 (GLSGAGKS) coordinates ATP.

This sequence belongs to the ABC transporter superfamily. Methionine importer (TC 3.A.1.24) family. In terms of assembly, the complex is composed of two ATP-binding proteins (MetN), two transmembrane proteins (MetI) and a solute-binding protein (MetQ).

The protein resides in the cell membrane. It carries out the reaction L-methionine(out) + ATP + H2O = L-methionine(in) + ADP + phosphate + H(+). The catalysed reaction is D-methionine(out) + ATP + H2O = D-methionine(in) + ADP + phosphate + H(+). Part of the ABC transporter complex MetNIQ involved in methionine import. Responsible for energy coupling to the transport system. The protein is Methionine import ATP-binding protein MetN of Carboxydothermus hydrogenoformans (strain ATCC BAA-161 / DSM 6008 / Z-2901).